A 309-amino-acid chain; its full sequence is Coproporphyrin III ferrochelatase (309 aa).

Residues Tyr-12, Arg-29, Arg-45–Tyr-46, Ser-53, and Tyr-124 each bind Fe-coproporphyrin III. Fe(2+) contacts are provided by His-182 and Glu-263.

The protein belongs to the ferrochelatase family.

Its subcellular location is the cytoplasm. It catalyses the reaction Fe-coproporphyrin III + 2 H(+) = coproporphyrin III + Fe(2+). It participates in porphyrin-containing compound metabolism; protoheme biosynthesis. In terms of biological role, involved in coproporphyrin-dependent heme b biosynthesis. Catalyzes the insertion of ferrous iron into coproporphyrin III to form Fe-coproporphyrin III. The chain is Coproporphyrin III ferrochelatase from Listeria monocytogenes serotype 4b (strain F2365).